The following is a 416-amino-acid chain: UDP-N-acetylmuramoylalanine--D-glutamate ligase (416 aa).

104–110 (GSNGKST) lines the ATP pocket.

The protein belongs to the MurCDEF family.

The protein localises to the cytoplasm. It carries out the reaction UDP-N-acetyl-alpha-D-muramoyl-L-alanine + D-glutamate + ATP = UDP-N-acetyl-alpha-D-muramoyl-L-alanyl-D-glutamate + ADP + phosphate + H(+). It participates in cell wall biogenesis; peptidoglycan biosynthesis. Cell wall formation. Catalyzes the addition of glutamate to the nucleotide precursor UDP-N-acetylmuramoyl-L-alanine (UMA). The protein is UDP-N-acetylmuramoylalanine--D-glutamate ligase of Francisella tularensis subsp. mediasiatica (strain FSC147).